The primary structure comprises 308 residues: tRNA dimethylallyltransferase (308 aa).

G16–T23 contacts ATP. T18–T23 is a binding site for substrate. The tract at residues D41–Q44 is interaction with substrate tRNA.

Belongs to the IPP transferase family. As to quaternary structure, monomer. The cofactor is Mg(2+).

It catalyses the reaction adenosine(37) in tRNA + dimethylallyl diphosphate = N(6)-dimethylallyladenosine(37) in tRNA + diphosphate. Catalyzes the transfer of a dimethylallyl group onto the adenine at position 37 in tRNAs that read codons beginning with uridine, leading to the formation of N6-(dimethylallyl)adenosine (i(6)A). This chain is tRNA dimethylallyltransferase, found in Myxococcus xanthus (strain DK1622).